The sequence spans 906 residues: Protein translocase subunit SecA (906 aa).

ATP contacts are provided by residues Q87, 105 to 109, and D512; that span reads GEGKT. The interval 839–896 is disordered; it reads LEEQQRQQSEAAPRTYTHATAESQLADEEAAGEEGHTTFVRDEQKIGRNDPCPCGSGK. Positions 871 to 886 are enriched in basic and acidic residues; the sequence is EEGHTTFVRDEQKIGR. 4 residues coordinate Zn(2+): C890, C892, C901, and H902.

The protein belongs to the SecA family. In terms of assembly, monomer and homodimer. Part of the essential Sec protein translocation apparatus which comprises SecA, SecYEG and auxiliary proteins SecDF-YajC and YidC. Requires Zn(2+) as cofactor.

Its subcellular location is the cell inner membrane. It localises to the cytoplasm. The enzyme catalyses ATP + H2O + cellular proteinSide 1 = ADP + phosphate + cellular proteinSide 2.. Its function is as follows. Part of the Sec protein translocase complex. Interacts with the SecYEG preprotein conducting channel. Has a central role in coupling the hydrolysis of ATP to the transfer of proteins into and across the cell membrane, serving both as a receptor for the preprotein-SecB complex and as an ATP-driven molecular motor driving the stepwise translocation of polypeptide chains across the membrane. In Aeromonas salmonicida (strain A449), this protein is Protein translocase subunit SecA.